The chain runs to 362 residues: Mortality factor 4-like protein 1 (362 aa).

The 40-residue stretch at 12–51 (QEGERVLCFHGPLLYEAKCVKVAIKDKQVKYFIHYSGWNK) folds into the Tudor-knot domain. Residues 26–62 (YEAKCVKVAIKDKQVKYFIHYSGWNKKSAVRPRRSEK) form an interaction with KAT8 region. The segment at 113-182 (RELQKANQEQ…RKKRARVDPT (70 aa)) is disordered. Residues 133 to 266 (PGKKTSGLQQ…VAGIKEYFNV (134 aa)) are sufficient for interaction with SIN3A. The short motif at 135–146 (KKTSGLQQKNVE) is the Nuclear localization signal element. Position 143 is an N6-acetyllysine (K143). The interval 164–230 (STSETPQPPR…FYLPAKKNVD (67 aa)) is interaction with RB1-1. The tract at residues 188–342 (TFMNRVEVKV…FLKYLAKNSA (155 aa)) is sufficient for interaction with PHF12. The 172-residue stretch at 191 to 362 (NRVEVKVKIP…APPEYHRKAV (172 aa)) folds into the MRG domain. The tract at residues 323-344 (LALLLNYLHDFLKYLAKNSATL) is interaction with RB1-2.

Component of the NuA4 histone acetyltransferase complex which contains the catalytic subunit KAT5/TIP60 and the subunits EP400, TRRAP/PAF400, BRD8/SMAP, EPC1, DMAP1/DNMAP1, RUVBL1/TIP49, RUVBL2, ING3, actin, ACTL6A/BAF53A, MORF4L1/MRG15, MORF4L2/MRGX, MRGBP, YEATS4/GAS41, VPS72/YL1 and MEAF6. The NuA4 complex interacts with MYC and the adenovirus E1A protein. MORF4L1 may also participate in the formation of NuA4 related complexes which lack the KAT5/TIP60 catalytic subunit, but which include the SWI/SNF related protein SRCAP. Component of the mSin3A histone deacetylase complex, which includes SIN3A, HDAC2, ARID4B, MORF4L1, RBBP4/RbAp48, and RBBP7/RbAp46. May also interact with PHF12 and one or more as yet undefined members of the TLE (transducin-like enhancer of split) family of transcriptional repressors. Component of the SIN3B complex, which includes SIN3B, HDAC2 or HDAC1, PHF12 and MORF4L1. Interacts with RB1 and KAT8. Interacts with the N-terminus of MRFAP1. Found in a complex composed of MORF4L1, MRFAP1 and RB1. Interacts with the entire BRCA complex, which contains BRCA1, PALB2, BRCA2 and RAD51. Interacts with PALB2. Forms a complex with MSL1 and NUPR1.

It localises to the nucleus. Component of the NuA4 histone acetyltransferase (HAT) complex which is involved in transcriptional activation of select genes principally by acetylation of nucleosomal histones H4 and H2A. This modification may both alter nucleosome - DNA interactions and promote interaction of the modified histones with other proteins which positively regulate transcription. This complex may be required for the activation of transcriptional programs associated with oncogene and proto-oncogene mediated growth induction, tumor suppressor mediated growth arrest and replicative senescence, apoptosis, and DNA repair. The NuA4 complex ATPase and helicase activities seem to be, at least in part, contributed by the association of RUVBL1 and RUVBL2 with EP400. NuA4 may also play a direct role in DNA repair when directly recruited to sites of DNA damage. As part of the SIN3B complex represses transcription and counteracts the histone acetyltransferase activity of EP300 through the recognition H3K27ac marks by PHF12 and the activity of the histone deacetylase HDAC2. SIN3B complex is recruited downstream of the constitutively active genes transcriptional start sites through interaction with histones and mitigates histone acetylation and RNA polymerase II progression within transcribed regions contributing to the regulation of transcription. Required for homologous recombination repair (HRR) and resistance to mitomycin C (MMC). Involved in the localization of PALB2, BRCA2 and RAD51, but not BRCA1, to DNA-damage foci. This is Mortality factor 4-like protein 1 from Homo sapiens (Human).